Consider the following 346-residue polypeptide: FMRFamide-related peptides type HF-1 (346 aa).

The first 19 residues, 1-19, serve as a signal peptide directing secretion; the sequence is MTSLCLTIAPAVLSLICLS. Residues 20–45 constitute a propeptide that is removed on maturation; it reads SYGWAEDNNGIHTLDDGDNDPFFRHN. Phe-51 carries the post-translational modification Phenylalanine amide. A propeptide spanning residues 54–94 is cleaved from the precursor; the sequence is AFVPLWDNADDSLVRKNLLTHWSEFPLSPALSSSDVFSRNS. Residue Phe-100 is modified to Phenylalanine amide. The propeptide occupies 103-109; it reads SYPPYQD. Phe-115 carries the phenylalanine amide modification. The propeptide occupies 118–203; that stretch reads SHQPDIDEYL…EILSNEDDLE (86 aa). Residues 137-185 form a disordered region; it reads YRKRRSEDGDSKEDGLNRVARSADANQQSKNTQSNKFGKDLQKRETKKE. Basic and acidic residues predominate over residues 141–152; that stretch reads RSEDGDSKEDGL. Positions 160 to 172 are enriched in polar residues; that stretch reads DANQQSKNTQSNK. Residues 173-185 are compositionally biased toward basic and acidic residues; the sequence is FGKDLQKRETKKE. Residues Phe-209 and Phe-216 each carry the phenylalanine amide modification. Residues 219–226 constitute a propeptide that is removed on maturation; it reads GDEDESYD. A Phenylalanine amide modification is found at Phe-232. The propeptide occupies 235–243; it reads SLRHDQEFE. Phe-249 and Phe-256 each carry phenylalanine amide. The propeptide occupies 259–267; the sequence is GDEDDAREE. Phe-273 carries the post-translational modification Phenylalanine amide. Residues 276–283 constitute a propeptide that is removed on maturation; sequence SSNEDEDI. Phenylalanine amide is present on Phe-290. Residues 293-301 constitute a propeptide that is removed on maturation; it reads SGNEDGDVD. Phe-307 and Phe-314 each carry phenylalanine amide. Positions 317-325 are excised as a propeptide; sequence SEKEDGDVD. 2 positions are modified to phenylalanine amide: Phe-331 and Phe-338. Residues 341–346 constitute a propeptide that is removed on maturation; that stretch reads GDSETS.

Belongs to the FARP (FMRFamide related peptide) family. In terms of tissue distribution, central nervous system.

It localises to the secreted. Functionally, can function as both cardioregulatory hormones and transmitters and may regulate cardiovascular function. The sequence is that of FMRFamide-related peptides type HF-1 from Cornu aspersum (Brown garden snail).